We begin with the raw amino-acid sequence, 216 residues long: Somatotropin (216 aa).

A signal peptide spans 1-26; that stretch reads MAAGPRTSVLLAFTLLCLPWPQEAGA. H45 provides a ligand contact to Zn(2+). A disulfide bridge links C78 with C189. S131 bears the Phosphoserine mark. E198 lines the Zn(2+) pocket. An intrachain disulfide couples C206 to C214.

It belongs to the somatotropin/prolactin family.

It localises to the secreted. In terms of biological role, plays an important role in growth control. Its major role in stimulating body growth is to stimulate the liver and other tissues to secrete IGF1. It stimulates both the differentiation and proliferation of myoblasts. It also stimulates amino acid uptake and protein synthesis in muscle and other tissues. This Camelus dromedarius (Dromedary) protein is Somatotropin (GH1).